The chain runs to 430 residues: Aspartate aminotransferase, mitochondrial (430 aa).

Residues 1–29 (MALLHSGRFLSGVAAAFHPGLAAAASARA) constitute a mitochondrion transit peptide. The residue at position 48 (T48) is a Phosphothreonine. Residue K59 is modified to N6-acetyllysine. G65 serves as a coordination point for substrate. K73 carries the post-translational modification N6-acetyllysine; alternate. Position 73 is an N6-succinyllysine; alternate (K73). K82 carries the post-translational modification N6-acetyllysine. K90 bears the N6-acetyllysine; alternate mark. Position 90 is an N6-succinyllysine; alternate (K90). The residue at position 96 (Y96) is a 3'-nitrotyrosine; alternate. The residue at position 96 (Y96) is a Phosphotyrosine; alternate. Residues K107 and K122 each carry the N6-acetyllysine; alternate modification. 2 positions are modified to N6-succinyllysine; alternate: K107 and K122. S143 bears the Phosphoserine mark. K159 carries the post-translational modification N6-acetyllysine; alternate. The residue at position 159 (K159) is an N6-succinyllysine; alternate. Residue W162 coordinates substrate. N6-acetyllysine; alternate is present on K185. K185 bears the N6-succinyllysine; alternate mark. Residue N215 coordinates substrate. Position 227 is an N6-succinyllysine (K227). Position 234 is an N6-acetyllysine (K234). 2 positions are modified to N6-acetyllysine; alternate: K279 and K296. K279 carries the N6-(pyridoxal phosphate)lysine; alternate modification. K296 is modified (N6-succinyllysine; alternate). Position 302 is an N6-acetyllysine (K302). N6-acetyllysine; alternate is present on K309. K309 carries the N6-succinyllysine; alternate modification. R313 carries the asymmetric dimethylarginine modification. The residue at position 338 (K338) is an N6-acetyllysine; alternate. An N6-succinyllysine; alternate modification is found at K338. K345 is modified (N6-acetyllysine). At K363 the chain carries N6-acetyllysine; alternate. K363 is modified (N6-succinyllysine; alternate). 2 positions are modified to N6-acetyllysine: K364 and K387. N6-acetyllysine; alternate occurs at positions 396 and 404. 2 positions are modified to N6-succinyllysine; alternate: K396 and K404. Position 407 (R407) interacts with substrate.

It belongs to the class-I pyridoxal-phosphate-dependent aminotransferase family. Homodimer. Requires pyridoxal 5'-phosphate as cofactor.

The protein localises to the mitochondrion matrix. It is found in the cell membrane. It catalyses the reaction L-aspartate + 2-oxoglutarate = oxaloacetate + L-glutamate. The catalysed reaction is L-kynurenine + 2-oxoglutarate = 4-(2-aminophenyl)-2,4-dioxobutanoate + L-glutamate. Its function is as follows. Catalyzes the irreversible transamination of the L-tryptophan metabolite L-kynurenine to form kynurenic acid (KA). As a member of the malate-aspartate shuttle, it has a key role in the intracellular NAD(H) redox balance. Is important for metabolite exchange between mitochondria and cytosol, and for amino acid metabolism. Facilitates cellular uptake of long-chain free fatty acids. In Bos taurus (Bovine), this protein is Aspartate aminotransferase, mitochondrial (GOT2).